The following is a 494-amino-acid chain: Inositol-trisphosphate 3-kinase homolog (494 aa).

ATP contacts are provided by residues Ser206, Lys218, 260–262 (EDL), and Asp276. Residues Lys278 and 322 to 329 (KLRYMQFR) contribute to the substrate site. Positions 346 and 426 each coordinate ATP. Position 429 (Lys429) interacts with substrate.

It belongs to the inositol phosphokinase (IPK) family. Expressed in spermatheca.

It carries out the reaction 1D-myo-inositol 1,4,5-trisphosphate + ATP = 1D-myo-inositol 1,3,4,5-tetrakisphosphate + ADP + H(+). With respect to regulation, unlike mammalian IP3K, may not be regulated by calmodulin. Its function is as follows. Probably by regulating inositol 1,4,5-trisphosphate levels, negatively regulates posterior body wall muscle contractions required for defecation and let-23 signaling pathway that controls spermathecal dilation and ovulation. May also regulate ovulation downstream of actin cross-linker fln-1. This chain is Inositol-trisphosphate 3-kinase homolog, found in Caenorhabditis elegans.